The following is a 569-amino-acid chain: Melanophilin (569 aa).

The 121-residue stretch at Lys-4–His-124 folds into the RabBD domain. The FYVE-type zinc-finger motif lies at His-58–Val-112. The tract at residues Gly-143–Glu-430 is disordered. 2 stretches are compositionally biased toward basic and acidic residues: residues Glu-352–Thr-362 and Glu-379–Ile-390. Positions Ser-404–Arg-415 are enriched in polar residues. Residues Leu-431–Ala-465 adopt a coiled-coil conformation. The segment at Gly-490–Pro-569 is disordered. The segment covering Ser-526–Asp-535 has biased composition (basic and acidic residues).

Binds RAB27A that has been activated by GTP-binding via its N-terminus. Binds MYO5A via its C-terminal coiled coil domain.

It localises to the melanosome. Its function is as follows. Rab effector protein involved in melanosome transport. Serves as link between melanosome-bound RAB27A and the motor protein MYO5A. This is Melanophilin (MLPH) from Felis catus (Cat).